The chain runs to 236 residues: 7-cyano-7-deazaguanine synthase (236 aa).

7–17 lines the ATP pocket; that stretch reads CSGGLDSVSLA. 4 residues coordinate Zn(2+): C185, C193, C196, and C199.

Belongs to the QueC family. It depends on Zn(2+) as a cofactor.

The catalysed reaction is 7-carboxy-7-deazaguanine + NH4(+) + ATP = 7-cyano-7-deazaguanine + ADP + phosphate + H2O + H(+). The protein operates within purine metabolism; 7-cyano-7-deazaguanine biosynthesis. Functionally, catalyzes the ATP-dependent conversion of 7-carboxy-7-deazaguanine (CDG) to 7-cyano-7-deazaguanine (preQ(0)). The polypeptide is 7-cyano-7-deazaguanine synthase (Rhizobium rhizogenes (strain K84 / ATCC BAA-868) (Agrobacterium radiobacter)).